The chain runs to 334 residues: Holliday junction branch migration complex subunit RuvB (334 aa).

The tract at residues Ala4–Tyr184 is large ATPase domain (RuvB-L). ATP-binding positions include Ile23, Arg24, Gly65, Lys68, Thr69, Thr70, Glu131–Tyr133, Arg174, Tyr184, and Arg221. Thr69 contributes to the Mg(2+) binding site. The interval Gln185–Asp255 is small ATPAse domain (RuvB-S). Positions Ala258–Glu334 are head domain (RuvB-H). Residues Arg294, Arg313, and Arg318 each coordinate DNA.

Belongs to the RuvB family. Homohexamer. Forms an RuvA(8)-RuvB(12)-Holliday junction (HJ) complex. HJ DNA is sandwiched between 2 RuvA tetramers; dsDNA enters through RuvA and exits via RuvB. An RuvB hexamer assembles on each DNA strand where it exits the tetramer. Each RuvB hexamer is contacted by two RuvA subunits (via domain III) on 2 adjacent RuvB subunits; this complex drives branch migration. In the full resolvosome a probable DNA-RuvA(4)-RuvB(12)-RuvC(2) complex forms which resolves the HJ.

It localises to the cytoplasm. The catalysed reaction is ATP + H2O = ADP + phosphate + H(+). Its function is as follows. The RuvA-RuvB-RuvC complex processes Holliday junction (HJ) DNA during genetic recombination and DNA repair, while the RuvA-RuvB complex plays an important role in the rescue of blocked DNA replication forks via replication fork reversal (RFR). RuvA specifically binds to HJ cruciform DNA, conferring on it an open structure. The RuvB hexamer acts as an ATP-dependent pump, pulling dsDNA into and through the RuvAB complex. RuvB forms 2 homohexamers on either side of HJ DNA bound by 1 or 2 RuvA tetramers; 4 subunits per hexamer contact DNA at a time. Coordinated motions by a converter formed by DNA-disengaged RuvB subunits stimulates ATP hydrolysis and nucleotide exchange. Immobilization of the converter enables RuvB to convert the ATP-contained energy into a lever motion, pulling 2 nucleotides of DNA out of the RuvA tetramer per ATP hydrolyzed, thus driving DNA branch migration. The RuvB motors rotate together with the DNA substrate, which together with the progressing nucleotide cycle form the mechanistic basis for DNA recombination by continuous HJ branch migration. Branch migration allows RuvC to scan DNA until it finds its consensus sequence, where it cleaves and resolves cruciform DNA. The sequence is that of Holliday junction branch migration complex subunit RuvB from Edwardsiella ictaluri (strain 93-146).